Consider the following 642-residue polypeptide: A-kinase anchor protein 8-like (642 aa).

A sufficient for activation of CTE-mediated expression region spans residues 1–269 (MSYTGFVQGS…MRRTWKTWTT (269 aa)). Arg209 is modified (asymmetric dimethylarginine; alternate). Arg209 is subject to Omega-N-methylarginine; alternate. An omega-N-methylarginine mark is found at Arg218, Arg238, and Arg248. Lys258 is modified (N6-acetyllysine). The disordered stretch occupies residues 265 to 382 (KTWTTADFRT…QDKQKKRQRD (118 aa)). Thr268 carries the post-translational modification Phosphothreonine. The short motif at 275-280 (KKKKRK) is the Nuclear localization signal element. Positions 281–297 (QGGSPDEPDSKATRTDC) match the Nuclear export signal (NES) motif. At Ser284 the chain carries Phosphoserine. Residues 288-297 (PDSKATRTDC) are compositionally biased toward basic and acidic residues. Thr293 is subject to Phosphothreonine. Residue Ser298 is modified to Phosphoserine. Residues 299–315 (DNSDSDNDEGTEGEAAE) show a composition bias toward acidic residues. The span at 338 to 350 (EDGREEGKEDPEK) shows a compositional bias: basic and acidic residues. Residues 363 to 365 (KRK) carry the Nuclear localization signal motif. C2H2 AKAP95-type zinc fingers lie at residues 392-414 (CSLCKYRTFYEDEMGSHLDSKFH) and 485-508 (CAACDLFIPMQFGIIQKHLKTMDH). The interval 546–642 (GENPFTDNPE…EDDEEGGGGP (97 aa)) is disordered. A compositionally biased stretch (acidic residues) spans 553 to 564 (NPEEEKEQDEVE). Positions 585–605 (AQPPVPLEPAPGTTTPPPPPP) are enriched in pro residues. Positions 631–642 (DMEDDEEGGGGP) are enriched in acidic residues.

Belongs to the AKAP95 family. As to quaternary structure, interacts (via N-terminus) with DHX9 (via RGG region). Interacts with TMPO isoform Beta, PRPF40A, RNF43, lamin-B. Interacts with HDAC3; increased during mitosis. Phosphorylated on serine or threonine residues possibly by PKA.

The protein resides in the nucleus. It localises to the nucleus matrix. Its subcellular location is the nucleus speckle. The protein localises to the PML body. It is found in the cytoplasm. Its function is as follows. Could play a role in constitutive transport element (CTE)-mediated gene expression by association with DHX9. Increases CTE-dependent nuclear unspliced mRNA export. Proposed to target PRKACA to the nucleus but does not seem to be implicated in the binding of regulatory subunit II of PKA. May be involved in nuclear envelope breakdown and chromatin condensation. May be involved in anchoring nuclear membranes to chromatin in interphase and in releasing membranes from chromating at mitosis. May regulate the initiation phase of DNA replication when associated with TMPO isoform Beta. Required for cell cycle G2/M transition and histone deacetylation during mitosis. In mitotic cells recruits HDAC3 to the vicinity of chromatin leading to deacetylation and subsequent phosphorylation at 'Ser-10' of histone H3; in this function seems to act redundantly with AKAP8. May be involved in regulation of pre-mRNA splicing. The protein is A-kinase anchor protein 8-like (Akap8l) of Mus musculus (Mouse).